An 854-amino-acid chain; its full sequence is Espin (854 aa).

ANK repeat units follow at residues 1-31 (MALEQALQAARQGELDVLRSLHAAGLLGPSL), 35-64 (LDALPVHHAARAGKLHCLRFLVEEAALPAA), 69-99 (NGATPAHDASATGHLACLQWLLSQGGCRVQD), 103-133 (SGATVLHLAARFGHPEVVNWLLHHGGGDPTA), 137-167 (MGALPIHYAAAKGDFPSLRLLVEHYPEGVNA), 171-201 (NGATPLYLACQEGHLEVTQYLVQECGADPHA), 205-235 (DGMTPLHAAAQMGHSPVIVWLVSCTDVSLSE), 239-268 (DGATAMHFAASRGHTKVLSWLLLHGGEISA), and 271-300 (WGGTPLHDAAENGELECCQILVVNGAELDV). Ser338 and Ser342 each carry phosphoserine. The span at 338–349 (SRDPSAELEAKQ) shows a compositional bias: basic and acidic residues. Disordered regions lie at residues 338 to 400 (SRDP…CGLS), 415 to 474 (NPEL…MQTK), 487 to 713 (KELS…AGFQ), 765 to 788 (KMQEEEEQRRKEEEEEARLASMPA), and 800 to 832 (EEREQKRKEEERQKQEELRREKEQSEKLRTLGY). A compositionally biased stretch (polar residues) spans 352–377 (SGMSSPNTTVSVQPLNFDLSSPTSTL). Positions 378–389 (SNYDSCSSSHSS) are enriched in low complexity. Residues 428 to 463 (PTPPPPPPSFPPPPPPPGTQLPPPPPGYPAPKPPVG) show a composition bias toward pro residues. The span at 487–505 (KELSSCDGHDGLRRQDSSR) shows a compositional bias: basic and acidic residues. Ser515 bears the Phosphoserine mark. Positions 595 to 620 (LPPPPPPPPPPLPEAASSPPPAPPLP) are enriched in pro residues. Residues 633-642 (SSSSTGSTKS) show a composition bias toward low complexity. Composition is skewed to polar residues over residues 643-652 (FNMMSPTGDN) and 667-678 (PTPQSKGLTTVF). Phosphoserine is present on Ser647. Residues 651-668 (DNSELLAEIKAGKSLKPT) form the WH2 domain. A phosphoserine mark is found at Ser690 and Ser696. Residues 692–703 (LPSVSPALSPVR) show a composition bias toward low complexity. A coiled-coil region spans residues 756-830 (QVMVRKMQLK…KEQSEKLRTL (75 aa)).

Monomer. Binds F-actin in a Ca(2+)-resistant fashion. Interacts (via N-terminus) with BAIAP2 (via SH3-domain). Interacts with PFN2. Interacts with MYO3A (via C-terminus). Interacts with MYO3B (via C-terminus).

The protein resides in the cytoplasm. Its subcellular location is the cytoskeleton. It is found in the cell projection. It localises to the stereocilium. The protein localises to the microvillus. Its function is as follows. Multifunctional actin-bundling protein. Plays a major role in regulating the organization, dimension, dynamics and signaling capacities of the actin filament-rich microvilli in the mechanosensory and chemosensory cells. Required for the assembly and stabilization of the stereociliary parallel actin bundles. Plays a crucial role in the formation and maintenance of inner ear hair cell stereocilia. Involved in the elongation of actin in stereocilia. In extrastriolar hair cells, required for targeting MYO3B to stereocilia tips, and for regulation of stereocilia diameter and staircase formation. The chain is Espin (ESPN) from Homo sapiens (Human).